The chain runs to 344 residues: Phosphoserine phosphatase (344 aa).

The region spanning 48 to 120 is the ACT domain; sequence VVTILGKDRV…ERLGLDIVMQ (73 aa). Asp135 serves as the catalytic Nucleophile. The Mg(2+) site is built by Asp135 and Asp137. Asp137 (proton donor) is an active-site residue. Substrate is bound by residues Glu144, Arg180, 223–224, and Lys268; that span reads SG. Asp291 contacts Mg(2+).

Belongs to the HAD-like hydrolase superfamily. SerB family. The cofactor is Mg(2+).

It catalyses the reaction O-phospho-L-serine + H2O = L-serine + phosphate. It carries out the reaction O-phospho-D-serine + H2O = D-serine + phosphate. It participates in amino-acid biosynthesis; L-serine biosynthesis; L-serine from 3-phospho-D-glycerate: step 3/3. This is Phosphoserine phosphatase from Archaeoglobus fulgidus (strain ATCC 49558 / DSM 4304 / JCM 9628 / NBRC 100126 / VC-16).